The chain runs to 712 residues: Cadherin-13 (712 aa).

An N-terminal signal peptide occupies residues 1 to 22; it reads MQHKTQLTLSFLLSQVLLLACA. Residues 23-138 constitute a propeptide that is removed on maturation; it reads EDLECTPGFQ…GNLGIPRQKR (116 aa). N-linked (GlcNAc...) asparagine glycosylation occurs at Asn-86. Cadherin domains are found at residues 143-245, 246-363, 364-477, 478-585, and 586-680; these read TPIL…RPMF, KEGP…PPEF, TKKE…GPVF, HPNP…VPSL, and YPTL…LQVC. 5 N-linked (GlcNAc...) asparagine glycosylation sites follow: Asn-382, Asn-500, Asn-530, Asn-638, and Asn-671. Asp-693 carries the GPI-anchor amidated aspartate lipid modification. Residues 694-712 constitute a propeptide, removed in mature form; the sequence is ALHISMTLILLSLFSLFCL.

As to quaternary structure, by contrast to classical cadherins, homodimerization in trans is not mediated by cadherin EC1 domain strand-swapping, but instead through a homophilic adhesive interface which joins two elongated EC1-EC2 domains through a region near their Ca2+-binding sites to form a tetrahedral, X-like shape. As to expression, neural tissues. Also found in muscles; kidney and retina.

It is found in the cell membrane. It localises to the cytoplasm. Its function is as follows. Cadherins are calcium-dependent cell adhesion proteins. They preferentially interact with themselves in a homophilic manner in connecting cells; cadherins may thus contribute to the sorting of heterogeneous cell types. May act as a negative regulator of neural cell growth. This is Cadherin-13 (CDH13) from Gallus gallus (Chicken).